The primary structure comprises 400 residues: NAD-dependent protein deacetylase sirtuin-7 (400 aa).

The segment at M1–R28 is disordered. Over residues R8–R28 the composition is skewed to basic and acidic residues. Residues P82–E329 form the Deacetylase sirtuin-type domain. NAD(+) contacts are provided by residues G107–W126 and Q167–D170. The active-site Proton acceptor is H187. Zn(2+)-binding residues include C195, C198, C225, and C228. NAD(+) contacts are provided by residues G268–S270, N297–Q299, and C315. A disordered region spans residues S354–P380. At R388 the chain carries Asymmetric dimethylarginine; alternate. R388 carries the omega-N-methylarginine; alternate modification.

The protein belongs to the sirtuin family. Class IV subfamily. As to quaternary structure, interacts with UBTF and the RNA polymerase I complex. Interacts with components of the B-WICH complex, such as MYBBP1A, SMARCA5/SNF2H and BAZ1B/WSTF. Interacts with ELK4, leading to stabilization at target promoters for H3K18Ac deacetylation. Interacts with histone H2A and/or histone H2B. Interacts with DNMT1. Interacts with SIRT1. The cofactor is Zn(2+). In terms of processing, phosphorylated during mitosis. Methylation at Arg-388 by PRMT6 inhibits the H3K18Ac histone deacetylase activity, promoting mitochondria biogenesis and maintaining mitochondria respiration. Post-translationally, ubiquitinated via 'Lys-63'-linked ubiquitin chains. Deubiquitinated by USP7, inhibiting the H3K18Ac histone deacetylase activity and regulating gluconeogenesis. Ubiquitinated by E3 ubiquitin-protein ligase complex containing FBXO7; leading to proteasomal degradation.

The protein localises to the nucleus. It is found in the nucleolus. The protein resides in the nucleoplasm. It localises to the chromosome. Its subcellular location is the cytoplasm. The enzyme catalyses N(6)-acetyl-L-lysyl-[protein] + NAD(+) + H2O = 2''-O-acetyl-ADP-D-ribose + nicotinamide + L-lysyl-[protein]. It carries out the reaction N(6)-glutaryl-L-lysyl-[protein] + NAD(+) + H2O = 2''-O-glutaryl-ADP-D-ribose + nicotinamide + L-lysyl-[protein]. It catalyses the reaction N(6)-succinyl-L-lysyl-[protein] + NAD(+) + H2O = 2''-O-succinyl-ADP-D-ribose + nicotinamide + L-lysyl-[protein]. The catalysed reaction is N(6)-propanoyl-L-lysyl-[protein] + NAD(+) + H2O = 3''-O-propanoyl-ADP-D-ribose + nicotinamide + L-lysyl-[protein]. The enzyme catalyses N(6)-decanoyl-L-lysyl-[protein] + NAD(+) + H2O = 2''-O-decanoyl-ADP-D-ribose + nicotinamide + L-lysyl-[protein]. With respect to regulation, NAD-dependent protein-lysine deacetylase and deacylase activities are activated by nucleic acids. Histone deacetylase activity is activated by DNA. Protein-lysine deacylase activity is activated by RNA. H3K18Ac histone deacetylase activity is inhibited by methylation at Arg-388. H3K18Ac histone deacetylase activity is inhibited by deubiquitination by USP7. NAD-dependent protein-lysine deacylase that can act both as a deacetylase or deacylase (desuccinylase, depropionylase, deglutarylase and dedecanoylase), depending on the context. Specifically mediates deacetylation of histone H3 at 'Lys-18' (H3K18Ac). In contrast to other histone deacetylases, displays strong preference for a specific histone mark, H3K18Ac, directly linked to control of gene expression. H3K18Ac is mainly present around the transcription start site of genes and has been linked to activation of nuclear hormone receptors; SIRT7 thereby acts as a transcription repressor. Moreover, H3K18 hypoacetylation has been reported as a marker of malignancy in various cancers and seems to maintain the transformed phenotype of cancer cells. Also able to mediate deacetylation of histone H3 at 'Lys-36' (H3K36Ac) in the context of nucleosomes. Also mediates deacetylation of non-histone proteins, such as ATM, CDK9, DDX21, DDB1, FBL, FKBP5/FKBP51, GABPB1, RAN, RRP9/U3-55K and POLR1E/PAF53. Enriched in nucleolus where it stimulates transcription activity of the RNA polymerase I complex. Acts by mediating the deacetylation of the RNA polymerase I subunit POLR1E/PAF53, thereby promoting the association of RNA polymerase I with the rDNA promoter region and coding region. In response to metabolic stress, SIRT7 is released from nucleoli leading to hyperacetylation of POLR1E/PAF53 and decreased RNA polymerase I transcription. Required to restore the transcription of ribosomal RNA (rRNA) at the exit from mitosis. Promotes pre-ribosomal RNA (pre-rRNA) cleavage at the 5'-terminal processing site by mediating deacetylation of RRP9/U3-55K, a core subunit of the U3 snoRNP complex. Mediates 'Lys-37' deacetylation of Ran, thereby regulating the nuclear export of NF-kappa-B subunit RELA/p65. Acts as a regulator of DNA damage repair by mediating deacetylation of ATM during the late stages of DNA damage response, promoting ATM dephosphorylation and deactivation. Suppresses the activity of the DCX (DDB1-CUL4-X-box) E3 ubiquitin-protein ligase complexes by mediating deacetylation of DDB1, which prevents the interaction between DDB1 and CUL4 (CUL4A or CUL4B). Activates RNA polymerase II transcription by mediating deacetylation of CDK9, thereby promoting 'Ser-2' phosphorylation of the C-terminal domain (CTD) of RNA polymerase II. Deacetylates FBL, promoting histone-glutamine methyltransferase activity of FBL. Acts as a regulator of mitochondrial function by catalyzing deacetylation of GABPB1. Regulates Akt/AKT1 activity by mediating deacetylation of FKBP5/FKBP51. Required to prevent R-loop-associated DNA damage and transcription-associated genomic instability by mediating deacetylation and subsequent activation of DDX21, thereby overcoming R-loop-mediated stalling of RNA polymerases. In addition to protein deacetylase activity, also acts as a protein-lysine deacylase. Acts as a protein depropionylase by mediating depropionylation of Osterix (SP7), thereby regulating bone formation by osteoblasts. Acts as a histone deglutarylase by mediating deglutarylation of histone H4 on 'Lys-91' (H4K91glu); a mark that destabilizes nucleosomes by promoting dissociation of the H2A-H2B dimers from nucleosomes. Acts as a histone desuccinylase: in response to DNA damage, recruited to DNA double-strand breaks (DSBs) and catalyzes desuccinylation of histone H3 on 'Lys-122' (H3K122succ), thereby promoting chromatin condensation and DSB repair. Also promotes DSB repair by promoting H3K18Ac deacetylation, regulating non-homologous end joining (NHEJ). Along with its role in DNA repair, required for chromosome synapsis during prophase I of female meiosis by catalyzing H3K18Ac deacetylation. Involved in transcriptional repression of LINE-1 retrotransposon via H3K18Ac deacetylation, and promotes their association with the nuclear lamina. Required to stabilize ribosomal DNA (rDNA) heterochromatin and prevent cellular senescence induced by rDNA instability. Acts as a negative regulator of SIRT1 by preventing autodeacetylation of SIRT1, restricting SIRT1 deacetylase activity. This is NAD-dependent protein deacetylase sirtuin-7 (SIRT7) from Bos taurus (Bovine).